Consider the following 958-residue polypeptide: Glycine dehydrogenase (decarboxylating) (958 aa).

Position 705 is an N6-(pyridoxal phosphate)lysine (Lys705).

This sequence belongs to the GcvP family. The glycine cleavage system is composed of four proteins: P, T, L and H. The cofactor is pyridoxal 5'-phosphate.

The catalysed reaction is N(6)-[(R)-lipoyl]-L-lysyl-[glycine-cleavage complex H protein] + glycine + H(+) = N(6)-[(R)-S(8)-aminomethyldihydrolipoyl]-L-lysyl-[glycine-cleavage complex H protein] + CO2. The glycine cleavage system catalyzes the degradation of glycine. The P protein binds the alpha-amino group of glycine through its pyridoxal phosphate cofactor; CO(2) is released and the remaining methylamine moiety is then transferred to the lipoamide cofactor of the H protein. In Synechococcus sp. (strain CC9902), this protein is Glycine dehydrogenase (decarboxylating).